We begin with the raw amino-acid sequence, 72 residues long: Aurein-2.5 (72 aa).

The signal sequence occupies residues 1-22; sequence MAFLKKSLFLVLFLGLVSLSIC. Residues 23–49 constitute a propeptide that is removed on maturation; sequence EKEKRQNEEDEDENEAANHEEGSEEKR. The tract at residues 27–47 is disordered; it reads RQNEEDEDENEAANHEEGSEE. The span at 38–47 shows a compositional bias: basic and acidic residues; sequence AANHEEGSEE. L65 carries the leucine amide modification. Residues 69–72 constitute a propeptide that is removed on maturation; sequence NDLE.

The protein belongs to the frog skin active peptide (FSAP) family. Aurein subfamily. May be monomeric or may oligomerize as homodimers or homotrimers in Gram-positive and Gram-negative bacteria mimetic membranes. Post-translationally, C-terminal amidation enhances antibacterial activity. This increase may be due to stabilization of the alpha-helical structure at the membrane interface. As to expression, expressed by the skin dorsal glands.

The protein resides in the secreted. It is found in the target cell membrane. Its function is as follows. Amphipathic alpha-helical antimicrobial peptide with moderate to potent activity against Gram-positive bacteria, Gram-negative bacteria and fungi. Also shows a weak activity against biofilm of both Gram-positive and Gram-negative bacteria. Probably acts by disturbing membrane functions with its amphipathic structure. Kills fungi via membranolytic action. Enhanced sterol levels in lipid composition membranes reduce interaction of this peptide with membranes, having a protective effect against the lytic ability of the peptide. Shows anticancer activity. This chain is Aurein-2.5, found in Ranoidea aurea (Green and golden bell frog).